Consider the following 109-residue polypeptide: Phosphoribosyl-ATP pyrophosphatase (109 aa).

It belongs to the PRA-PH family.

The protein localises to the cytoplasm. It catalyses the reaction 1-(5-phospho-beta-D-ribosyl)-ATP + H2O = 1-(5-phospho-beta-D-ribosyl)-5'-AMP + diphosphate + H(+). It functions in the pathway amino-acid biosynthesis; L-histidine biosynthesis; L-histidine from 5-phospho-alpha-D-ribose 1-diphosphate: step 2/9. The sequence is that of Phosphoribosyl-ATP pyrophosphatase from Paramagnetospirillum magneticum (strain ATCC 700264 / AMB-1) (Magnetospirillum magneticum).